A 196-amino-acid polypeptide reads, in one-letter code: dTTP/UTP pyrophosphatase (196 aa).

Asp78 (proton acceptor) is an active-site residue.

Belongs to the Maf family. YhdE subfamily. A divalent metal cation serves as cofactor.

It localises to the cytoplasm. It catalyses the reaction dTTP + H2O = dTMP + diphosphate + H(+). The catalysed reaction is UTP + H2O = UMP + diphosphate + H(+). Its function is as follows. Nucleoside triphosphate pyrophosphatase that hydrolyzes dTTP and UTP. May have a dual role in cell division arrest and in preventing the incorporation of modified nucleotides into cellular nucleic acids. This is dTTP/UTP pyrophosphatase from Photobacterium profundum (strain SS9).